Consider the following 1066-residue polypeptide: MEDSFNTTSSASTFTLQSSSETMVSIQLLDFRTSLLEALEELRMRRKAETQYEEQIAKIILETQELKWQKEALQNQKEALIKQHKEAMGVLKNQLQMKMYALEEEKGKYKLATEIKEKEIEGLKETLKTLQVSQYSLQKKVSEMEQKAHLYHLAKEDYHKQLNEIEKYYAAITNQFGLVRENHVKLEQNVQEAIQLNKRLSTLNEKQESEIHSLKKELKKAASELIKSKVTCQHKMEEESIDLIIKEQKYEELQERLNMELEVNKKINEEITHIQEEKQDIIISFQHMQQLLQQETQANTEIDAELKVLRENNQTLERDNELQREKVKENEEKFLSLEKEHERALGTWKKHVEELSGEMNVIKNELSSLRETHAKLQEHYNKLCEQKKTEEYKKFQNVPELNNENSDELTRKKSENIITQKYNSGPEIWGKNTKSFCLDTEYREEEKKDLPVGKTAEDLQPFEISAKSEINTMVSQDRNQSGMSPHRVLCLDKDATDQEQTSDVTDSRKSVTVEVKDKLCLEKASGCSEFKSLNNFFLVVDESLETEMVRLEGTEGLGLLHSGGDIPLDTRSNKASSNGMSNEMAHKRNYNTDGSESNPFKQQSKLLPADLENATEKEITNQDQTKAGLDSFLDIKLNLDPCKKHGLQDSSHVTLDVKHQKIKQMVREESQCSTEPRSCYQLASKAPQKPGGTIACAAVVSPLGPSASSDNKLTALKKSENSINTLPTAAKPAPSPAERTTRTNTNDIQNSSLRNHLGASESSVSVSDFQVNQGDSHTSQAKGLKTVVPLTTSSEKQPPSESQITETPKSGLSSLVDVTGRQCMWLNNRDKTEALNGILSGGTCHEGQLEEAHLSPATPSADSVSTSARSAFDLPSPDKPEKTPGYIKFVPLSPWPKVNQTKTVGTATPSIPLFLKEKTVDLSGSRVITPVTFCKNVVLDDTRKNIESDPTSNSRAADTMSNWSIHLDPKGQPREERNATAQTVYDSSFPTEHVKAEPLISTVQQSHSQTVKVTDSPDPLTFSPGNNDWQSLVMNRLTEIEKLLSLESDNQPKRRKVEEMLDNIID.

2 coiled-coil regions span residues 47–134 (KAET…QVSQ) and 178–391 (LVRE…KTEE). 5 disordered regions span residues 568–600 (LDTRSNKASSNGMSNEMAHKRNYNTDGSESNPF), 719–811 (SENS…PKSG), 854–883 (LSPATPSADSVSTSARSAFDLPSPDKPEKT), 944–978 (KNIESDPTSNSRAADTMSNWSIHLDPKGQPREERN), and 1003–1027 (VQQSHSQTVKVTDSPDPLTFSPGNN). Polar residues-rich tracts occupy residues 591–600 (NTDGSESNPF), 742–781 (RTNTNDIQNSSLRNHLGASESSVSVSDFQVNQGDSHTSQA), 789–811 (PLTTSSEKQPPSESQITETPKSG), 857–869 (ATPSADSVSTSAR), and 948–964 (SDPTSNSRAADTMSNWS). The segment covering 967-978 (LDPKGQPREERN) has biased composition (basic and acidic residues). Over residues 1003–1013 (VQQSHSQTVKV) the composition is skewed to polar residues.

In Mus musculus (Mouse), this protein is Coiled-coil domain-containing protein 73 (Ccdc73).